Reading from the N-terminus, the 85-residue chain is Protein AC4 (85 aa).

Gly2 carries the N-myristoyl glycine; by host lipid modification. The tract at residues 44 to 63 (RAPMSNPTSRKTGTVSNGDC) is disordered. Polar residues predominate over residues 46–62 (PMSNPTSRKTGTVSNGD).

The protein belongs to the geminiviridae protein AC4/C4 family.

The protein localises to the host cell membrane. Functionally, pathogenicity determinant. May act as a suppressor of RNA-mediated gene silencing, also known as post-transcriptional gene silencing (PTGS), a mechanism of plant viral defense that limits the accumulation of viral RNAs. In Potato yellow mosaic virus (isolate Venezuela) (PYMV), this protein is Protein AC4.